The sequence spans 463 residues: Glycine--tRNA ligase (463 aa).

Residues R100 and E175 each contribute to the substrate site. Residues 207-209 (RNE), 217-222 (FRTREF), 291-292 (EL), and 335-338 (GADR) contribute to the ATP site. 222-226 (FEQME) is a binding site for substrate. Residue 331–335 (EPSLG) coordinates substrate.

It belongs to the class-II aminoacyl-tRNA synthetase family. As to quaternary structure, homodimer.

Its subcellular location is the cytoplasm. The enzyme catalyses tRNA(Gly) + glycine + ATP = glycyl-tRNA(Gly) + AMP + diphosphate. Catalyzes the attachment of glycine to tRNA(Gly). This chain is Glycine--tRNA ligase, found in Clostridium tetani (strain Massachusetts / E88).